We begin with the raw amino-acid sequence, 548 residues long: Chaperonin GroEL (548 aa).

ATP contacts are provided by residues 30–33, Lys51, 87–91, Gly415, 479–481, and Asp495; these read TLGP, DGTTT, and NAA.

It belongs to the chaperonin (HSP60) family. Forms a cylinder of 14 subunits composed of two heptameric rings stacked back-to-back. Interacts with the co-chaperonin GroES.

It is found in the cytoplasm. The catalysed reaction is ATP + H2O + a folded polypeptide = ADP + phosphate + an unfolded polypeptide.. Functionally, together with its co-chaperonin GroES, plays an essential role in assisting protein folding. The GroEL-GroES system forms a nano-cage that allows encapsulation of the non-native substrate proteins and provides a physical environment optimized to promote and accelerate protein folding. This is Chaperonin GroEL from Salmonella arizonae (strain ATCC BAA-731 / CDC346-86 / RSK2980).